Consider the following 504-residue polypeptide: L-carnitine/gamma-butyrobetaine antiporter (504 aa).

12 consecutive transmembrane segments (helical) span residues 8–28 (AGIE…LCWL), 51–71 (WGWA…WLVF), 92–112 (IFMM…SIEI), 143–163 (GPLP…FFFV), 195–215 (FYLV…TPLV), 231–251 (LDAI…AFGL), 263–283 (TYLS…SFIV), 315–335 (AWTV…SIFL), 347–367 (LCLG…TYSG), 403–423 (LSTA…VTLI), 446–466 (LLVR…LLAL), and 475–495 (AIIA…LSFI).

The protein belongs to the BCCT transporter (TC 2.A.15) family. CaiT subfamily. As to quaternary structure, homotrimer.

It is found in the cell inner membrane. The catalysed reaction is 4-(trimethylamino)butanoate(in) + (R)-carnitine(out) = 4-(trimethylamino)butanoate(out) + (R)-carnitine(in). It functions in the pathway amine and polyamine metabolism; carnitine metabolism. Catalyzes the exchange of L-carnitine for gamma-butyrobetaine. The chain is L-carnitine/gamma-butyrobetaine antiporter from Proteus sp. (strain LE138).